The primary structure comprises 328 residues: GTPase Obg 2 (328 aa).

Residues 1 to 139 (MSFRREKFIE…HCVLLKLKIV (139 aa)) enclose the Obg domain. The OBG-type G domain occupies 140–309 (SDVGIIGMPN…LHAQVKKAVV (170 aa)). GTP-binding positions include 146-153 (GMPNAGKS), 171-175 (FTTLE), 192-195 (DIPG), 259-262 (NKCD), and 290-292 (GDE). Residues serine 153 and threonine 173 each contribute to the Mg(2+) site.

It belongs to the TRAFAC class OBG-HflX-like GTPase superfamily. OBG GTPase family. Monomer. It depends on Mg(2+) as a cofactor.

The protein localises to the cytoplasm. In terms of biological role, an essential GTPase which binds GTP, GDP and possibly (p)ppGpp with moderate affinity, with high nucleotide exchange rates and a fairly low GTP hydrolysis rate. Plays a role in control of the cell cycle, stress response, ribosome biogenesis and in those bacteria that undergo differentiation, in morphogenesis control. This chain is GTPase Obg 2, found in Anaplasma marginale (strain St. Maries).